A 415-amino-acid chain; its full sequence is Multidrug resistance protein MdtA (415 aa).

Residues 1 to 21 form the signal peptide; it reads MKGSYKSRWVIVIVVVIAAIA. A compositionally biased stretch (polar residues) spans 31–46; the sequence is DSQSAAPGATKQAQQS. 2 disordered regions span residues 31 to 56 and 391 to 415; these read DSQS…GMRA and VEAQ…GARS. Residues 399–415 show a composition bias toward basic and acidic residues; that stretch reads PEEKATSREYAKKGARS.

Belongs to the membrane fusion protein (MFP) (TC 8.A.1) family. In terms of assembly, part of a tripartite efflux system composed of MdtA, MdtB and MdtC.

The protein localises to the cell inner membrane. The MdtABC tripartite complex confers resistance against novobiocin and deoxycholate. This is Multidrug resistance protein MdtA from Escherichia coli O45:K1 (strain S88 / ExPEC).